A 169-amino-acid chain; its full sequence is Ribosome maturation factor RimM (169 aa).

One can recognise a PRC barrel domain in the interval 97 to 169 (EDEYYWTDLV…IITADWGLDY (73 aa)).

It belongs to the RimM family. Binds ribosomal protein uS19.

It localises to the cytoplasm. An accessory protein needed during the final step in the assembly of 30S ribosomal subunit, possibly for assembly of the head region. Essential for efficient processing of 16S rRNA. May be needed both before and after RbfA during the maturation of 16S rRNA. It has affinity for free ribosomal 30S subunits but not for 70S ribosomes. The chain is Ribosome maturation factor RimM from Neisseria meningitidis serogroup C / serotype 2a (strain ATCC 700532 / DSM 15464 / FAM18).